Reading from the N-terminus, the 290-residue chain is Pyridoxal kinase PdxY (290 aa).

Substrate contacts are provided by residues S12 and 47 to 48 (TQ). Residues D114, E151, K184, and 211–214 (RPLL) contribute to the ATP site. Position 225 (D225) interacts with substrate.

It belongs to the pyridoxine kinase family. PdxY subfamily. Homodimer. Requires Mg(2+) as cofactor.

The enzyme catalyses pyridoxal + ATP = pyridoxal 5'-phosphate + ADP + H(+). The protein operates within cofactor metabolism; pyridoxal 5'-phosphate salvage; pyridoxal 5'-phosphate from pyridoxal: step 1/1. Functionally, pyridoxal kinase involved in the salvage pathway of pyridoxal 5'-phosphate (PLP). Catalyzes the phosphorylation of pyridoxal to PLP. In Pseudomonas fluorescens (strain Pf0-1), this protein is Pyridoxal kinase PdxY.